Here is a 231-residue protein sequence, read N- to C-terminus: Flagellar L-ring protein (231 aa).

The signal sequence occupies residues 1–18 (MNRFICVLALSGSAVLAG). C19 is lipidated: N-palmitoyl cysteine. C19 carries S-diacylglycerol cysteine lipidation.

Belongs to the FlgH family. As to quaternary structure, the basal body constitutes a major portion of the flagellar organelle and consists of four rings (L,P,S, and M) mounted on a central rod.

The protein resides in the cell outer membrane. Its subcellular location is the bacterial flagellum basal body. Its function is as follows. Assembles around the rod to form the L-ring and probably protects the motor/basal body from shearing forces during rotation. This Pseudomonas fluorescens (strain ATCC BAA-477 / NRRL B-23932 / Pf-5) protein is Flagellar L-ring protein.